Consider the following 157-residue polypeptide: Protein Smg (157 aa).

This sequence belongs to the Smg family.

This chain is Protein Smg, found in Serratia proteamaculans (strain 568).